The sequence spans 430 residues: ATP-dependent RNA helicase RhlB (430 aa).

The Q motif signature appears at 9 to 37 (QKFSDFALHPQVIEALESKGFHYCTPIQA). A Helicase ATP-binding domain is found at 40-219 (LPLTLSGRDV…FEQMNNAEYV (180 aa)). An ATP-binding site is contributed by 53–60 (AQTGTGKT). Residues 165–168 (DEAD) carry the DEAD box motif. Residues 245–390 (RLLQTLLEEE…LSKYNSDALM (146 aa)) enclose the Helicase C-terminal domain. Residues 392–430 (DLPAPKRLTRPPRSNNGPRRHNSAPRRSGAPRNNRKRAD) are disordered.

Belongs to the DEAD box helicase family. RhlB subfamily. Component of the RNA degradosome, which is a multiprotein complex involved in RNA processing and mRNA degradation.

The protein resides in the cytoplasm. It carries out the reaction ATP + H2O = ADP + phosphate + H(+). Functionally, DEAD-box RNA helicase involved in RNA degradation. Has RNA-dependent ATPase activity and unwinds double-stranded RNA. This Pectobacterium atrosepticum (strain SCRI 1043 / ATCC BAA-672) (Erwinia carotovora subsp. atroseptica) protein is ATP-dependent RNA helicase RhlB.